A 2209-amino-acid polypeptide reads, in one-letter code: Genome polyprotein (2209 aa).

Glycine 2 carries N-myristoyl glycine; by host lipidation. Topologically, residues glycine 2 to glutamine 1520 are cytoplasmic. The interval glycine 580 to alanine 600 is amphipathic alpha-helix. A disordered region spans residues alanine 599–glutamate 619. Residues histidine 901 and aspartate 919 each act as for protease 2A activity in the active site. Zn(2+) is bound by residues cysteine 936 and cysteine 938. Cysteine 990 acts as the For protease 2A activity in catalysis. Cysteine 996 and histidine 998 together coordinate Zn(2+). Residues glycine 1128 to glutamine 1200 are membrane-binding. The tract at residues glycine 1128–threonine 1266 is oligomerization. The tract at residues serine 1149–serine 1153 is RNA-binding. One can recognise an SF3 helicase domain in the interval glutamate 1232–asparagine 1388. ATP is bound at residue glycine 1256–serine 1263. Cysteine 1396, cysteine 1399, cysteine 1408, and cysteine 1413 together coordinate Zn(2+). The C4-type zinc-finger motif lies at cysteine 1396–cysteine 1413. Residues glutamate 1440–isoleucine 1447 form an RNA-binding region. Positions methionine 1451–glutamine 1456 are oligomerization. An intramembrane segment occupies alanine 1521–tyrosine 1536. Residues lysine 1537 to phenylalanine 2209 are Cytoplasmic-facing. Position 1546 is an O-(5'-phospho-RNA)-tyrosine (tyrosine 1546). Tyrosine 1546 carries the O-UMP-tyrosine; transient modification. Positions glycine 1566–phenylalanine 1744 constitute a Peptidase C3 domain. Active-site for protease 3C activity residues include histidine 1605, glutamate 1636, and cysteine 1712. The region spanning glutamate 1975–leucine 2090 is the RdRp catalytic domain. The Mg(2+) site is built by aspartate 1981 and aspartate 2076.

This sequence belongs to the picornaviruses polyprotein family. As to quaternary structure, interacts with capsid protein VP1 and capsid protein VP3 to form heterotrimeric protomers. Interacts with capsid protein VP0, and capsid protein VP3 to form heterotrimeric protomers. Five protomers subsequently associate to form pentamers which serve as building blocks for the capsid. Interacts with capsid protein VP2, capsid protein VP3 and capsid protein VP4 following cleavage of capsid protein VP0. Interacts with human PVR. In terms of assembly, interacts with capsid protein VP1 and capsid protein VP3 in the mature capsid. As to quaternary structure, interacts with capsid protein VP0 and capsid protein VP1 to form heterotrimeric protomers. Five protomers subsequently associate to form pentamers which serve as building blocks for the capsid. Interacts with capsid protein VP4 in the mature capsid. Interacts with protein 2C; this interaction may be important for virion morphogenesis. Interacts with capsid protein VP1 and capsid protein VP3. In terms of assembly, homodimer. As to quaternary structure, homohexamer; forms a hexameric ring structure with 6-fold symmetry characteristic of AAA+ ATPases. Interacts (via N-terminus) with host RTN3 (via reticulon domain); this interaction is important for viral replication. Interacts with capsid protein VP3; this interaction may be important for virion morphogenesis. Interacts with protein 3CD. In terms of assembly, homodimer. Interacts with host GBF1. Interacts (via GOLD domain) with host ACBD3 (via GOLD domain); this interaction allows the formation of a viral protein 3A/ACBD3 heterotetramer with a 2:2 stoichiometry, which will stimulate the recruitment of host PI4KB in order to synthesize PI4P at the viral RNA replication sites. As to quaternary structure, interacts with RNA-directed RNA polymerase. Interacts with protein 3AB and with RNA-directed RNA polymerase. In terms of assembly, interacts with Viral protein genome-linked and with protein 3CD. It depends on Mg(2+) as a cofactor. In terms of processing, specific enzymatic cleavages in vivo by the viral proteases yield processing intermediates and the mature proteins. Post-translationally, myristoylation is required for the formation of pentamers during virus assembly. Further assembly of 12 pentamers and a molecule of genomic RNA generates the provirion. During virion maturation, immature virions are rendered infectious following cleavage of VP0 into VP4 and VP2. This maturation seems to be an autocatalytic event triggered by the presence of RNA in the capsid and it is followed by a conformational change infectious virion. In terms of processing, myristoylation is required during RNA encapsidation and formation of the mature virus particle. Post-translationally, VPg is uridylylated by the polymerase into VPg-pUpU. This acts as a nucleotide-peptide primer for the genomic RNA replication.

It localises to the virion. It is found in the host cytoplasm. Its subcellular location is the host cytoplasmic vesicle membrane. The protein resides in the host nucleus. The enzyme catalyses RNA(n) + a ribonucleoside 5'-triphosphate = RNA(n+1) + diphosphate. It carries out the reaction Selective cleavage of Tyr-|-Gly bond in the picornavirus polyprotein.. The catalysed reaction is a ribonucleoside 5'-triphosphate + H2O = a ribonucleoside 5'-diphosphate + phosphate + H(+). It catalyses the reaction Selective cleavage of Gln-|-Gly bond in the poliovirus polyprotein. In other picornavirus reactions Glu may be substituted for Gln, and Ser or Thr for Gly.. With respect to regulation, replication or transcription is subject to high level of random mutations by the nucleotide analog ribavirin. In terms of biological role, forms an icosahedral capsid of pseudo T=3 symmetry with capsid proteins VP2 and VP3. The capsid is 300 Angstroms in diameter, composed of 60 copies of each capsid protein and enclosing the viral positive strand RNA genome. Capsid protein VP1 mainly forms the vertices of the capsid. Capsid protein VP1 interacts with host cell receptor PVR to provide virion attachment to target host epithelial cells. This attachment induces virion internalization predominantly through clathrin- and caveolin-independent endocytosis in Hela cells and through caveolin-mediated endocytosis in brain microvascular endothelial cells. Tyrosine kinases are probably involved in the entry process. Virus binding to PVR induces increased junctional permeability and rearrangement of junctional proteins. Modulation of endothelial tight junctions, as well as cytolytic infection of endothelial cells themselves, may result in loss of endothelial integrity which may help the virus to reach the CNS. After binding to its receptor, the capsid undergoes conformational changes. Capsid protein VP1 N-terminus (that contains an amphipathic alpha-helix) and capsid protein VP4 are externalized. Together, they shape a pore in the host membrane through which viral genome is translocated to host cell cytoplasm. Functionally, forms an icosahedral capsid of pseudo T=3 symmetry with capsid proteins VP1 and VP3. The capsid is 300 Angstroms in diameter, composed of 60 copies of each capsid protein and enclosing the viral positive strand RNA genome. Its function is as follows. Forms an icosahedral capsid of pseudo T=3 symmetry with capsid proteins VP2 and VP1. The capsid is 300 Angstroms in diameter, composed of 60 copies of each capsid protein and enclosing the viral positive strand RNA genome. Lies on the inner surface of the capsid shell. After binding to the host receptor, the capsid undergoes conformational changes. Capsid protein VP4 is released, Capsid protein VP1 N-terminus is externalized, and together, they shape a pore in the host membrane through which the viral genome is translocated into the host cell cytoplasm. In terms of biological role, component of immature procapsids, which is cleaved into capsid proteins VP4 and VP2 after maturation. Allows the capsid to remain inactive before the maturation step. Functionally, cysteine protease that cleaves viral polyprotein and specific host proteins. It is responsible for the autocatalytic cleavage between the P1 and P2 regions, which is the first cleavage occurring in the polyprotein. Also cleaves the host translation initiation factor EIF4G1, in order to shut down the capped cellular mRNA translation. Inhibits the host nucleus-cytoplasm protein and RNA trafficking by cleaving host members of the nuclear pores including NUP98, NUP62 and NUP153. Counteracts stress granule formation probably by antagonizing its assembly or promoting its dissassembly. Cleaves and inhibits host IFIH1/MDA5, thereby inhibiting the type-I IFN production and the establishment of the antiviral state. Cleaves and inhibits host MAVS, thereby inhibiting the type-I IFN production and the establishment of the antiviral state. Its function is as follows. Plays an essential role in the virus replication cycle by acting as a viroporin. Creates a pore in the host endoplasmic reticulum and as a consequence releases Ca2+ in the cytoplasm of infected cell. In turn, high levels of cytoplasmic calcium may trigger membrane trafficking and transport of viral ER-associated proteins to viroplasms, sites of viral genome replication. Induces and associates with structural rearrangements of intracellular membranes. Displays RNA-binding, nucleotide binding and NTPase activities. May play a role in virion morphogenesis and viral RNA encapsidation by interacting with the capsid protein VP3. In terms of biological role, localizes the viral replication complex to the surface of membranous vesicles. Together with protein 3CD binds the Cis-Active RNA Element (CRE) which is involved in RNA synthesis initiation. Acts as a cofactor to stimulate the activity of 3D polymerase, maybe through a nucleid acid chaperone activity. Functionally, localizes the viral replication complex to the surface of membranous vesicles. It inhibits host cell endoplasmic reticulum-to-Golgi apparatus transport and causes the disassembly of the Golgi complex, possibly through GBF1 interaction. This would result in depletion of MHC, trail receptors and IFN receptors at the host cell surface. Plays an essential role in viral RNA replication by recruiting ACBD3 and PI4KB at the viral replication sites, thereby allowing the formation of the rearranged membranous structures where viral replication takes place. Its function is as follows. Acts as a primer for viral RNA replication and remains covalently bound to viral genomic RNA. VPg is uridylylated prior to priming replication into VPg-pUpU. The oriI viral genomic sequence may act as a template for this. The VPg-pUpU is then used as primer on the genomic RNA poly(A) by the RNA-dependent RNA polymerase to replicate the viral genome. During genome replication, the VPg-RNA linkage is removed by the host TDP2, thereby accelerating replication. During the late stage of the replication cycle, host TDP2 is excluded from sites of viral RNA synthesis and encapsidation, allowing for the generation of progeny virions. Involved in the viral replication complex and viral polypeptide maturation. It exhibits protease activity with a specificity and catalytic efficiency that is different from protease 3C. Protein 3CD binds to the 5'UTR of the viral genome. In terms of biological role, major viral protease that mediates proteolytic processing of the polyprotein. Cleaves host EIF5B, contributing to host translation shutoff. Cleaves also host PABPC1, contributing to host translation shutoff. Cleaves host RIGI and thus contributes to the inhibition of type I interferon production. Cleaves host NLRP1, triggers host N-glycine-mediated degradation of the autoinhibitory NLRP1 N-terminal fragment. Inhibits the integrated stress response (ISR) in the infected cell by cleaving host G3BP1. Stress granule formation is thus inhibited, which allows protein synthesis and viral replication. Functionally, replicates the viral genomic RNA on the surface of intracellular membranes. May form linear arrays of subunits that propagate along a strong head-to-tail interaction called interface-I. Covalently attaches UMP to a tyrosine of VPg, which is used to prime RNA synthesis. The positive stranded RNA genome is first replicated at virus induced membranous vesicles, creating a dsRNA genomic replication form. This dsRNA is then used as template to synthesize positive stranded RNA genomes. ss(+)RNA genomes are either translated, replicated or encapsidated. The polypeptide is Genome polyprotein (Homo sapiens (Human)).